Here is a 166-residue protein sequence, read N- to C-terminus: NADH-ubiquinone oxidoreductase chain 6 (166 aa).

A run of 6 helical transmembrane segments spans residues 4-24, 27-47, 50-70, 82-102, 109-129, and 135-155; these read FFSL…VVSA, QGVV…VFLG, FAAL…FGYC, VGGT…LLCL, LLVY…VGVF, and WGLI…LVIL.

Belongs to the complex I subunit 6 family.

The protein localises to the mitochondrion membrane. The enzyme catalyses a ubiquinone + NADH + 5 H(+)(in) = a ubiquinol + NAD(+) + 4 H(+)(out). Core subunit of the mitochondrial membrane respiratory chain NADH dehydrogenase (Complex I) that is believed to belong to the minimal assembly required for catalysis. Complex I functions in the transfer of electrons from NADH to the respiratory chain. The immediate electron acceptor for the enzyme is believed to be ubiquinone. The chain is NADH-ubiquinone oxidoreductase chain 6 (MT-ND6) from Lycodon semicarinatus (Ryukyu odd-tooth snake).